A 251-amino-acid polypeptide reads, in one-letter code: Imidazole glycerol phosphate synthase subunit HisF (251 aa).

Residues D11 and D130 contribute to the active site.

This sequence belongs to the HisA/HisF family. In terms of assembly, heterodimer of HisH and HisF.

It localises to the cytoplasm. It catalyses the reaction 5-[(5-phospho-1-deoxy-D-ribulos-1-ylimino)methylamino]-1-(5-phospho-beta-D-ribosyl)imidazole-4-carboxamide + L-glutamine = D-erythro-1-(imidazol-4-yl)glycerol 3-phosphate + 5-amino-1-(5-phospho-beta-D-ribosyl)imidazole-4-carboxamide + L-glutamate + H(+). Its pathway is amino-acid biosynthesis; L-histidine biosynthesis; L-histidine from 5-phospho-alpha-D-ribose 1-diphosphate: step 5/9. Its function is as follows. IGPS catalyzes the conversion of PRFAR and glutamine to IGP, AICAR and glutamate. The HisF subunit catalyzes the cyclization activity that produces IGP and AICAR from PRFAR using the ammonia provided by the HisH subunit. In Listeria welshimeri serovar 6b (strain ATCC 35897 / DSM 20650 / CCUG 15529 / CIP 8149 / NCTC 11857 / SLCC 5334 / V8), this protein is Imidazole glycerol phosphate synthase subunit HisF.